Consider the following 105-residue polypeptide: Thioredoxin (105 aa).

In terms of domain architecture, Thioredoxin spans 1–105; it reads MFELDKDTFE…NVEAMVKKYI (105 aa). C29 and C32 are oxidised to a cystine.

It belongs to the thioredoxin family.

In terms of biological role, participates in various redox reactions through the reversible oxidation of its active center dithiol to a disulfide and catalyzes dithiol-disulfide exchange reactions. This Acetoanaerobium sticklandii (strain ATCC 12662 / DSM 519 / JCM 1433 / CCUG 9281 / NCIMB 10654 / HF) (Clostridium sticklandii) protein is Thioredoxin (trxA).